Reading from the N-terminus, the 460-residue chain is NADH-ubiquinone oxidoreductase chain 4 (460 aa).

The next 13 helical transmembrane spans lie at 22–42, 61–81, 94–113, 117–139, 148–168, 195–217, 225–245, 258–278, 285–304, 308–330, 351–371, 394–414, and 436–456; these read WLWPTALTQSMLIALGSITWL, PLSTPLLVLSCWLLPLMLLAS, RMYITLLATLQLFLILAFGA, IMFYVMFEATLIPTLLVITRWGN, TYFLFYTLAGSLPLLVALLML, IWWAACMIAFLVKMPLYGMHLWL, PVAGSMVLAAVLLKLGGYGMM, MVYPFIVLALWGVIITGSICL, SLIAYSSVSHMGLVAGGILI, WGFTGALILMIAHGLASSALFCL, IALPLMTTWWFIASLANLALP, LILTGIGTLITAAYSLYMFLM, and LLMALHLIPLLLIILKPALLW.

Belongs to the complex I subunit 4 family.

The protein localises to the mitochondrion membrane. The enzyme catalyses a ubiquinone + NADH + 5 H(+)(in) = a ubiquinol + NAD(+) + 4 H(+)(out). Core subunit of the mitochondrial membrane respiratory chain NADH dehydrogenase (Complex I) that is believed to belong to the minimal assembly required for catalysis. Complex I functions in the transfer of electrons from NADH to the respiratory chain. The immediate electron acceptor for the enzyme is believed to be ubiquinone. The protein is NADH-ubiquinone oxidoreductase chain 4 (MT-ND4) of Gadus morhua (Atlantic cod).